The following is a 1109-amino-acid chain: Pesticidal crystal protein Cry28Aa (1109 aa).

It belongs to the delta endotoxin family.

In terms of biological role, promotes colloidosmotic lysis by binding to the midgut epithelial cells of insects. This chain is Pesticidal crystal protein Cry28Aa (cry28Aa), found in Bacillus thuringiensis subsp. finitimus.